Reading from the N-terminus, the 86-residue chain is Tryptophan-containing weak neurotoxin (86 aa).

Positions 1–21 (MKTLLLTLVVVTIVCLDLGYT) are cleaved as a signal peptide. Cystine bridges form between Cys-24/Cys-45, Cys-27/Cys-32, Cys-38/Cys-63, Cys-67/Cys-78, and Cys-79/Cys-84.

The protein belongs to the three-finger toxin family. Ancestral subfamily. Orphan group II sub-subfamily. As to quaternary structure, monomer in solution. In terms of processing, the disulfide bond Cys-27-Cys-32 is probably not needed for efficient interaction of the toxin with the target receptor (Torpedo muscle or alpha-7/CHRNA7 nAChR). Expressed by the venom gland.

It localises to the secreted. In terms of biological role, neurotoxin that irreversibly inhibits nicotinic acetylcholine receptors (nAChR) and allosterically interacts with muscarinic acetylcholine receptors (mAChR). The loop II is involved in the interaction of this toxin with nAChR and mAChR. On nAChR, it acts as a competitive antagonist (muscle-type and alpha-7/CHRNA7) with IC(50) values in the micromolar range. On mAChR, in presence of ACh, it partially inhibits the effect of acetylcholine (ACh) (allosteric antagonist), whereas in the absence of ACh, it activates the receptor (allosteric agonist). It also shows a very weak inhibition of GABA(A) receptor composed of alpha-1-beta-3-gamma-2 (GABRA1 and GABRB3 and GABRG2) subunits (10 uM inhibit 31% current). In vivo, is nonlethal to mice at concentrations up to 20 mg/kg, but exerts a myorelaxant effect, induces a dose-dependent decrease in blood pressure and an increase in heart rate in mice and rats. The sequence is that of Tryptophan-containing weak neurotoxin from Naja kaouthia (Monocled cobra).